Consider the following 336-residue polypeptide: 4-hydroxy-3-methylbut-2-enyl diphosphate reductase (336 aa).

Position 37 (cysteine 37) interacts with [4Fe-4S] cluster. Residues histidine 66 and histidine 99 each coordinate (2E)-4-hydroxy-3-methylbut-2-enyl diphosphate. Histidine 66 and histidine 99 together coordinate dimethylallyl diphosphate. Isopentenyl diphosphate-binding residues include histidine 66 and histidine 99. Residue cysteine 121 participates in [4Fe-4S] cluster binding. Histidine 149 lines the (2E)-4-hydroxy-3-methylbut-2-enyl diphosphate pocket. A dimethylallyl diphosphate-binding site is contributed by histidine 149. Histidine 149 contacts isopentenyl diphosphate. Catalysis depends on glutamate 151, which acts as the Proton donor. Threonine 189 lines the (2E)-4-hydroxy-3-methylbut-2-enyl diphosphate pocket. [4Fe-4S] cluster is bound at residue cysteine 219. Serine 247, serine 248, asparagine 249, and serine 292 together coordinate (2E)-4-hydroxy-3-methylbut-2-enyl diphosphate. Dimethylallyl diphosphate contacts are provided by serine 247, serine 248, asparagine 249, and serine 292. Residues serine 247, serine 248, asparagine 249, and serine 292 each coordinate isopentenyl diphosphate.

Belongs to the IspH family. [4Fe-4S] cluster serves as cofactor.

It catalyses the reaction isopentenyl diphosphate + 2 oxidized [2Fe-2S]-[ferredoxin] + H2O = (2E)-4-hydroxy-3-methylbut-2-enyl diphosphate + 2 reduced [2Fe-2S]-[ferredoxin] + 2 H(+). The enzyme catalyses dimethylallyl diphosphate + 2 oxidized [2Fe-2S]-[ferredoxin] + H2O = (2E)-4-hydroxy-3-methylbut-2-enyl diphosphate + 2 reduced [2Fe-2S]-[ferredoxin] + 2 H(+). The protein operates within isoprenoid biosynthesis; dimethylallyl diphosphate biosynthesis; dimethylallyl diphosphate from (2E)-4-hydroxy-3-methylbutenyl diphosphate: step 1/1. Its pathway is isoprenoid biosynthesis; isopentenyl diphosphate biosynthesis via DXP pathway; isopentenyl diphosphate from 1-deoxy-D-xylulose 5-phosphate: step 6/6. In terms of biological role, catalyzes the conversion of 1-hydroxy-2-methyl-2-(E)-butenyl 4-diphosphate (HMBPP) into a mixture of isopentenyl diphosphate (IPP) and dimethylallyl diphosphate (DMAPP). Acts in the terminal step of the DOXP/MEP pathway for isoprenoid precursor biosynthesis. This chain is 4-hydroxy-3-methylbut-2-enyl diphosphate reductase, found in Rhodococcus opacus (strain B4).